The primary structure comprises 242 residues: 1-(5-phosphoribosyl)-5-[(5-phosphoribosylamino)methylideneamino] imidazole-4-carboxamide isomerase (242 aa).

The active-site Proton acceptor is Asp8. The Proton donor role is filled by Asp129.

The protein belongs to the HisA/HisF family.

Its subcellular location is the cytoplasm. It catalyses the reaction 1-(5-phospho-beta-D-ribosyl)-5-[(5-phospho-beta-D-ribosylamino)methylideneamino]imidazole-4-carboxamide = 5-[(5-phospho-1-deoxy-D-ribulos-1-ylimino)methylamino]-1-(5-phospho-beta-D-ribosyl)imidazole-4-carboxamide. It participates in amino-acid biosynthesis; L-histidine biosynthesis; L-histidine from 5-phospho-alpha-D-ribose 1-diphosphate: step 4/9. The protein is 1-(5-phosphoribosyl)-5-[(5-phosphoribosylamino)methylideneamino] imidazole-4-carboxamide isomerase of Dictyoglomus turgidum (strain DSM 6724 / Z-1310).